The sequence spans 94 residues: MDKETLRALHVIVKGRVQGVGFRYWTRSLAKSLNVKGRVRNLADYSVEIIAEADTDTLGEFVYALKHEHPYARVESLNSEEVRARGYTDFRIEV.

Residues 8–94 (ALHVIVKGRV…RGYTDFRIEV (87 aa)) form the Acylphosphatase-like domain. Active-site residues include R23 and N41.

Belongs to the acylphosphatase family.

The catalysed reaction is an acyl phosphate + H2O = a carboxylate + phosphate + H(+). This chain is Acylphosphatase (acyP), found in Treponema denticola (strain ATCC 35405 / DSM 14222 / CIP 103919 / JCM 8153 / KCTC 15104).